We begin with the raw amino-acid sequence, 276 residues long: 1H-3-hydroxy-4-oxoquinaldine 2,4-dioxygenase (276 aa).

Positions 28–150 (PAILLLPGWC…TLLKDPERWR (123 aa)) constitute an AB hydrolase-1 domain. Substrate-binding positions include 36 to 38 (WCH), 100 to 101 (HS), and Trp160. Catalysis depends on His251, which acts as the Proton donor/acceptor.

Belongs to the AB hydrolase superfamily. Requires None. Contrary to most other dioxygenases, this enzyme does not require a cofactor for catalysis. as cofactor.

It catalyses the reaction 3-hydroxy-2-methyl-1H-quinolin-4-one + O2 = N-acetylanthranilate + CO + H(+). Its function is as follows. Ring-cleaving dioxygenase involved in quinaldine degradation and utilization. This Paenarthrobacter nitroguajacolicus (Arthrobacter nitroguajacolicus) protein is 1H-3-hydroxy-4-oxoquinaldine 2,4-dioxygenase (hod).